A 342-amino-acid chain; its full sequence is MLGFSSLRRYLSSFTTRPLRRIESAKQLAKTMTVLPNTYDEPVRIAVIGGTGLRELPGFTQVASLSITTPWGSPSSPITILHHQCSHNNKTVAVAFLSRHGTHHQIAPHEVPARANIAALRSIGVRTIIAFSAVGSLQEEIKPRDFVIPDQVIDRTKGVRPWTFFEGGVVAHVPFGDPFDEGVAKVVRACGHSLEGEGVVLHDRGTLICMEGPQFSTRAESNLYRSWGGSVINMSCLPEAKLAREAEIAYQMICMSTDYDCWHESTADVTVEMVMGHMKANAQNARRFVTAVLDALASDEHADLVQAKHVEGSIKFGLSTAQANWSPEARAKLEWLFPGYWN.

Phosphate contacts are provided by residues threonine 51, 99-100, and 132-133; these read RH and SA. Residue methionine 234 participates in substrate binding. Serine 235 lines the phosphate pocket. Substrate is bound at residue 258–260; it reads DYD.

The protein belongs to the PNP/MTAP phosphorylase family. MTAP subfamily. Homotrimer.

The protein localises to the cytoplasm. The protein resides in the nucleus. It catalyses the reaction S-methyl-5'-thioadenosine + phosphate = 5-(methylsulfanyl)-alpha-D-ribose 1-phosphate + adenine. The protein operates within amino-acid biosynthesis; L-methionine biosynthesis via salvage pathway; S-methyl-5-thio-alpha-D-ribose 1-phosphate from S-methyl-5'-thioadenosine (phosphorylase route): step 1/1. Functionally, catalyzes the reversible phosphorylation of S-methyl-5'-thioadenosine (MTA) to adenine and 5-methylthioribose-1-phosphate. Involved in the breakdown of MTA, a major by-product of polyamine biosynthesis. Responsible for the first step in the methionine salvage pathway after MTA has been generated from S-adenosylmethionine. Has broad substrate specificity with 6-aminopurine nucleosides as preferred substrates. The chain is S-methyl-5'-thioadenosine phosphorylase from Aspergillus fumigatus (strain ATCC MYA-4609 / CBS 101355 / FGSC A1100 / Af293) (Neosartorya fumigata).